The chain runs to 225 residues: Ribosome maturation factor RimM (225 aa).

The 82-residue stretch at 144-225 folds into the PRC barrel domain; that stretch reads ADEFYWVDLI…RIVVDWEADY (82 aa).

Belongs to the RimM family. As to quaternary structure, binds ribosomal protein uS19.

It localises to the cytoplasm. In terms of biological role, an accessory protein needed during the final step in the assembly of 30S ribosomal subunit, possibly for assembly of the head region. Essential for efficient processing of 16S rRNA. May be needed both before and after RbfA during the maturation of 16S rRNA. It has affinity for free ribosomal 30S subunits but not for 70S ribosomes. The protein is Ribosome maturation factor RimM of Burkholderia orbicola (strain AU 1054).